Here is a 144-residue protein sequence, read N- to C-terminus: Large ribosomal subunit protein uL15 (144 aa).

Positions 1 to 53 (MFLNTIKPGEGAKHAKRRVGRGIGSGLGKTAGRGHKGQKSRSGGFHKVGFEGG) are disordered. Residues 21 to 31 (RGIGSGLGKTA) show a composition bias toward gly residues.

This sequence belongs to the universal ribosomal protein uL15 family. Part of the 50S ribosomal subunit.

In terms of biological role, binds to the 23S rRNA. This is Large ribosomal subunit protein uL15 from Laribacter hongkongensis (strain HLHK9).